A 272-amino-acid polypeptide reads, in one-letter code: Tryptophan synthase alpha chain (272 aa).

Catalysis depends on proton acceptor residues Glu49 and Asp60.

This sequence belongs to the TrpA family. In terms of assembly, tetramer of two alpha and two beta chains.

It catalyses the reaction (1S,2R)-1-C-(indol-3-yl)glycerol 3-phosphate + L-serine = D-glyceraldehyde 3-phosphate + L-tryptophan + H2O. It participates in amino-acid biosynthesis; L-tryptophan biosynthesis; L-tryptophan from chorismate: step 5/5. In terms of biological role, the alpha subunit is responsible for the aldol cleavage of indoleglycerol phosphate to indole and glyceraldehyde 3-phosphate. This is Tryptophan synthase alpha chain from Polaromonas naphthalenivorans (strain CJ2).